Here is a 492-residue protein sequence, read N- to C-terminus: Serine/threonine protein phosphatase 2A 57 kDa regulatory subunit B' theta isoform (492 aa).

Positions 1 to 63 (MWKQILSKLP…GFKEGNLKGN (63 aa)) are disordered. Residues 16-39 (KNHSSSSSSTSKSSDNGASKSGNS) show a composition bias toward low complexity. The short motif at 490–492 (SSL) is the Microbody targeting signal element.

The protein belongs to the phosphatase 2A regulatory subunit B56 family. PP2A consists of a common heteromeric enzyme, composed of a catalytic subunit (subunits C), a constant regulatory subunit (subunit A), and a variety of regulatory subunits such as subunits B (the R2/B/PR55/B55, R3/B''/PR72/PR130/PR59 and R5/B'/B56 families). Interacts with BZR1. Interacts with PP2A2, PP2A5 and PP2AA2. In terms of tissue distribution, highly expressed in dry seeds. Expressed in roots, cotyledons, rosette leaves and flowers.

It localises to the cytoplasm. Its subcellular location is the cytosol. It is found in the peroxisome. In terms of biological role, the B regulatory subunit may modulate substrate selectivity and catalytic activity, and may also direct the localization of the catalytic enzyme to a particular subcellular compartment. Associates with the serine/threonine-protein phosphatase PP2A catalytic subunit C and regulatory subunit A to positively regulates beta-oxidation of fatty acids and protoauxins in peroxisomes by dephosphorylating peroxisomal beta-oxidation-related proteins. Required for the formation of the PP2A holoenzyme that negatively regulates brassinosteroid signaling by dephosphorylating and inactivating BRI1 in the cytoplasm. The sequence is that of Serine/threonine protein phosphatase 2A 57 kDa regulatory subunit B' theta isoform (B'THETA) from Arabidopsis thaliana (Mouse-ear cress).